We begin with the raw amino-acid sequence, 481 residues long: 6-phosphogluconate dehydrogenase, decarboxylating (481 aa).

Residues 11–16 (GLAVMG), 34–36 (NRT), 76–78 (VKA), and Asn-104 each bind NADP(+). Substrate is bound by residues Asn-104 and 130 to 132 (SGG). Catalysis depends on Lys-184, which acts as the Proton acceptor. 187–188 (HN) contacts substrate. The active-site Proton donor is the Glu-191. Substrate-binding residues include Tyr-192, Lys-259, Arg-286, Arg-445, and His-451.

The protein belongs to the 6-phosphogluconate dehydrogenase family. In terms of assembly, homodimer.

It carries out the reaction 6-phospho-D-gluconate + NADP(+) = D-ribulose 5-phosphate + CO2 + NADPH. The protein operates within carbohydrate degradation; pentose phosphate pathway; D-ribulose 5-phosphate from D-glucose 6-phosphate (oxidative stage): step 3/3. Its function is as follows. Catalyzes the oxidative decarboxylation of 6-phosphogluconate to ribulose 5-phosphate and CO(2), with concomitant reduction of NADP to NADPH. This chain is 6-phosphogluconate dehydrogenase, decarboxylating (Pgd), found in Drosophila melanogaster (Fruit fly).